Here is a 344-residue protein sequence, read N- to C-terminus: CRISPR-associated endonuclease Cas1 2 (344 aa).

Residues Glu167, His235, and Glu250 each contribute to the Mn(2+) site.

This sequence belongs to the CRISPR-associated endonuclease Cas1 family. Homodimer, forms a heterotetramer with a Cas2 homodimer. It depends on Mg(2+) as a cofactor. Mn(2+) serves as cofactor.

In terms of biological role, CRISPR (clustered regularly interspaced short palindromic repeat), is an adaptive immune system that provides protection against mobile genetic elements (viruses, transposable elements and conjugative plasmids). CRISPR clusters contain spacers, sequences complementary to antecedent mobile elements, and target invading nucleic acids. CRISPR clusters are transcribed and processed into CRISPR RNA (crRNA). Acts as a dsDNA endonuclease. Involved in the integration of spacer DNA into the CRISPR cassette. The sequence is that of CRISPR-associated endonuclease Cas1 2 from Rhodospirillum rubrum (strain ATCC 11170 / ATH 1.1.1 / DSM 467 / LMG 4362 / NCIMB 8255 / S1).